Here is a 372-residue protein sequence, read N- to C-terminus: MNIETIITRAWQRKAAWLWLLLPVSWLYALLMVLRRQAYKVGILASYRAPIPVMVIGNITVGGSGKTPLIIALVRHLQQQGIKVGVISRGYGGDSSQMPALVTTESPPNVVGDEPCLIVNTTGTAMAVSPNRQQAIAILLEAYPDLQLIIADDGLQHYALQRDIEWVVVDAARGFGNKQLLPTGFLREPISRLKDANVIYHHKPDASSIYNKSDHNTLLTEHLTMHLQPDDLELLWSSNNQIDNLAVVAMAPEKGSQVHAVSGIGYPQRFFDTLNALGFEVIPHPYPDHYDFSLDELLQYADHPIIVTSKDAVKIRALIMQAIINQALSDEYKELVSRLWVLPVTAVLSDSCYESLQQQLQTLDIDISMRKQ.

Position 60–67 (T60–T67) interacts with ATP.

Belongs to the LpxK family.

The enzyme catalyses a lipid A disaccharide + ATP = a lipid IVA + ADP + H(+). It participates in glycolipid biosynthesis; lipid IV(A) biosynthesis; lipid IV(A) from (3R)-3-hydroxytetradecanoyl-[acyl-carrier-protein] and UDP-N-acetyl-alpha-D-glucosamine: step 6/6. Functionally, transfers the gamma-phosphate of ATP to the 4'-position of a tetraacyldisaccharide 1-phosphate intermediate (termed DS-1-P) to form tetraacyldisaccharide 1,4'-bis-phosphate (lipid IVA). This is Tetraacyldisaccharide 4'-kinase from Psychrobacter cryohalolentis (strain ATCC BAA-1226 / DSM 17306 / VKM B-2378 / K5).